Consider the following 302-residue polypeptide: Sulfate adenylyltransferase subunit 2 (302 aa).

Belongs to the PAPS reductase family. CysD subfamily. Heterodimer composed of CysD, the smaller subunit, and CysN.

It catalyses the reaction sulfate + ATP + H(+) = adenosine 5'-phosphosulfate + diphosphate. Its pathway is sulfur metabolism; hydrogen sulfide biosynthesis; sulfite from sulfate: step 1/3. With CysN forms the ATP sulfurylase (ATPS) that catalyzes the adenylation of sulfate producing adenosine 5'-phosphosulfate (APS) and diphosphate, the first enzymatic step in sulfur assimilation pathway. APS synthesis involves the formation of a high-energy phosphoric-sulfuric acid anhydride bond driven by GTP hydrolysis by CysN coupled to ATP hydrolysis by CysD. This chain is Sulfate adenylyltransferase subunit 2, found in Salmonella agona (strain SL483).